The sequence spans 308 residues: GMP synthase [glutamine-hydrolyzing] subunit B (308 aa).

The 182-residue stretch at 2-183 (LNPSDFIEEA…LGLPREMIQR (182 aa)) folds into the GMPS ATP-PPase domain. 29–35 (SGGVDSS) provides a ligand contact to ATP.

As to quaternary structure, heterodimer composed of a glutamine amidotransferase subunit (A) and a GMP-binding subunit (B).

It carries out the reaction XMP + L-glutamine + ATP + H2O = GMP + L-glutamate + AMP + diphosphate + 2 H(+). It participates in purine metabolism; GMP biosynthesis; GMP from XMP (L-Gln route): step 1/1. In terms of biological role, catalyzes the synthesis of GMP from XMP. This chain is GMP synthase [glutamine-hydrolyzing] subunit B (guaAB), found in Methanothermobacter thermautotrophicus (strain ATCC 29096 / DSM 1053 / JCM 10044 / NBRC 100330 / Delta H) (Methanobacterium thermoautotrophicum).